Here is a 251-residue protein sequence, read N- to C-terminus: Large ribosomal subunit protein uL16m (251 aa).

A mitochondrion-targeting transit peptide spans 1 to 29 (MWRLLARASAPLLRVPLSDSWALLPASAG).

The protein belongs to the universal ribosomal protein uL16 family. As to quaternary structure, component of the mitochondrial large ribosomal subunit (mt-LSU). Mature mammalian 55S mitochondrial ribosomes consist of a small (28S) and a large (39S) subunit. The 28S small subunit contains a 12S ribosomal RNA (12S mt-rRNA) and 30 different proteins. The 39S large subunit contains a 16S rRNA (16S mt-rRNA), a copy of mitochondrial valine transfer RNA (mt-tRNA(Val)), which plays an integral structural role, and 52 different proteins.

It is found in the mitochondrion. In Homo sapiens (Human), this protein is Large ribosomal subunit protein uL16m (MRPL16).